The sequence spans 161 residues: Cyclic pyranopterin monophosphate synthase (161 aa).

Substrate is bound by residues 75–77 (LCH) and 113–114 (ME). Residue aspartate 128 is part of the active site.

The protein belongs to the MoaC family. In terms of assembly, homohexamer; trimer of dimers.

It catalyses the reaction (8S)-3',8-cyclo-7,8-dihydroguanosine 5'-triphosphate = cyclic pyranopterin phosphate + diphosphate. The protein operates within cofactor biosynthesis; molybdopterin biosynthesis. In terms of biological role, catalyzes the conversion of (8S)-3',8-cyclo-7,8-dihydroguanosine 5'-triphosphate to cyclic pyranopterin monophosphate (cPMP). This is Cyclic pyranopterin monophosphate synthase from Thioalkalivibrio sulfidiphilus (strain HL-EbGR7).